The following is a 154-amino-acid chain: Transcriptional repressor NrdR (154 aa).

A zinc finger spans residues 3–34; that stretch reads CPFCRHPDSRVIDSRETDEGQAIRRRRSCPEC. In terms of domain architecture, ATP-cone spans 46–136; the sequence is LAVVKRSGVT…VYRSFESADD (91 aa).

Belongs to the NrdR family. Requires Zn(2+) as cofactor.

Its function is as follows. Negatively regulates transcription of bacterial ribonucleotide reductase nrd genes and operons by binding to NrdR-boxes. This chain is Transcriptional repressor NrdR, found in Mycobacterium avium (strain 104).